Consider the following 526-residue polypeptide: MQRPIIIRRALLSVSDKTNICELAKSLLKRGVQLISTNGTARLLVNAGIHVTEVSNYTGFPEIMDGRVKTLHPKIHGGILARRNIDDTIMQQYKIEHIDMVVVNLYPFAEVVASATCNHEKVVENIDIGGTALLRSAAKNYSNVVVVVSINDYISIINEIDCNNGAVSLETRLNLAIKAFQHTATYDSQIKDYFTSQVYTDSSKCSSIFPPILNINFVKKQDMRYGENQHQLAAFYLDTRNKEKSIATTKQLQGRALSYNNIADADAALECVKEFSEPACVIVKHINPCSVAMGKTILVAYQRAYETDPTSAFGGVIAFNRSLDLCTAQEIIARQFIEVIIAPTVDQEALLILAKKKNIRVLSSGQWNKPIPNLNFRQVNGGLLVQERDLVMINLHDLRIVSQRQPTTMEIQDALFCWKVVKFVKSNAIVYARNQRTIGIGAGQMSRIDSAKIASIKAIDNKLNIRGSTMASDAFFPFRDGLDSAAKVGVSCVIQPGGSIRDQEVITAANEHNIAMIFTNIRHFRH.

One can recognise an MGS-like domain in the interval 1-148; that stretch reads MQRPIIIRRA…KNYSNVVVVV (148 aa).

It belongs to the PurH family.

The catalysed reaction is (6R)-10-formyltetrahydrofolate + 5-amino-1-(5-phospho-beta-D-ribosyl)imidazole-4-carboxamide = 5-formamido-1-(5-phospho-D-ribosyl)imidazole-4-carboxamide + (6S)-5,6,7,8-tetrahydrofolate. It catalyses the reaction IMP + H2O = 5-formamido-1-(5-phospho-D-ribosyl)imidazole-4-carboxamide. The protein operates within purine metabolism; IMP biosynthesis via de novo pathway; 5-formamido-1-(5-phospho-D-ribosyl)imidazole-4-carboxamide from 5-amino-1-(5-phospho-D-ribosyl)imidazole-4-carboxamide (10-formyl THF route): step 1/1. Its pathway is purine metabolism; IMP biosynthesis via de novo pathway; IMP from 5-formamido-1-(5-phospho-D-ribosyl)imidazole-4-carboxamide: step 1/1. The polypeptide is Bifunctional purine biosynthesis protein PurH (Baumannia cicadellinicola subsp. Homalodisca coagulata).